The primary structure comprises 294 residues: Eukaryotic translation initiation factor 3 subunit G (294 aa).

The span at 1–22 (MQTFHHQDTGSEDFRQNTMDEK) shows a compositional bias: basic and acidic residues. Disordered stretches follow at residues 1 to 42 (MQTF…DGTK) and 164 to 211 (GGMG…SDDD). Over residues 30-42 (STPQITQNADGTK) the composition is skewed to polar residues. Residues 193–205 (GPGGPGGPGGAAG) show a composition bias toward gly residues. An RRM domain is found at 214–292 (LTLRVTNLSE…LIMKVDYSKK (79 aa)).

Belongs to the eIF-3 subunit G family. In terms of assembly, component of the eukaryotic translation initiation factor 3 (eIF-3) complex.

The protein localises to the cytoplasm. Functionally, RNA-binding component of the eukaryotic translation initiation factor 3 (eIF-3) complex, which is involved in protein synthesis of a specialized repertoire of mRNAs and, together with other initiation factors, stimulates binding of mRNA and methionyl-tRNAi to the 40S ribosome. The eIF-3 complex specifically targets and initiates translation of a subset of mRNAs involved in cell proliferation. This subunit can bind 18S rRNA. The protein is Eukaryotic translation initiation factor 3 subunit G of Yarrowia lipolytica (strain CLIB 122 / E 150) (Yeast).